A 423-amino-acid polypeptide reads, in one-letter code: Putative competence-damage inducible protein (423 aa).

This sequence belongs to the CinA family.

This is Putative competence-damage inducible protein from Streptococcus thermophilus (strain ATCC BAA-491 / LMD-9).